The chain runs to 237 residues: Probable septum site-determining protein MinC (237 aa).

The protein belongs to the MinC family. Interacts with MinD and FtsZ.

Its function is as follows. Cell division inhibitor that blocks the formation of polar Z ring septums. Rapidly oscillates between the poles of the cell to destabilize FtsZ filaments that have formed before they mature into polar Z rings. Prevents FtsZ polymerization. The chain is Probable septum site-determining protein MinC from Buchnera aphidicola subsp. Acyrthosiphon pisum (strain 5A).